A 129-amino-acid polypeptide reads, in one-letter code: Follitropin subunit beta (129 aa).

An N-terminal signal peptide occupies residues methionine 1–serine 20. Intrachain disulfides connect cysteine 21/cysteine 69, cysteine 35/cysteine 84, cysteine 38/cysteine 122, cysteine 46/cysteine 100, cysteine 50/cysteine 102, and cysteine 105/cysteine 112. Asparagine 25 and asparagine 42 each carry an N-linked (GlcNAc...) asparagine glycan.

Belongs to the glycoprotein hormones subunit beta family. In terms of assembly, heterodimer. The active follitropin is a heterodimer composed of an alpha chain/CGA shared with other hormones and a unique beta chain/FSHB shown here.

It localises to the secreted. Its function is as follows. Together with the alpha chain CGA constitutes follitropin, the follicle-stimulating hormone, and provides its biological specificity to the hormone heterodimer. Binds FSHR, a G protein-coupled receptor, on target cells to activate downstream signaling pathways. Follitropin is involved in follicle development and spermatogenesis in reproductive organs. In Pan troglodytes (Chimpanzee), this protein is Follitropin subunit beta (FSHB).